A 114-amino-acid polypeptide reads, in one-letter code: T cell receptor alpha variable 10 (114 aa).

Residues Met-1–Gly-21 form the signal peptide. One can recognise an Ig-like domain in the interval Asn-23–Ser-114. N-linked (GlcNAc...) asparagine glycans are attached at residues Asn-39 and Asn-45. A disulfide bond links Cys-44 and Cys-111.

As to quaternary structure, alpha-beta TR is a heterodimer composed of an alpha and beta chain; disulfide-linked. The alpha-beta TR is associated with the transmembrane signaling CD3 coreceptor proteins to form the TR-CD3 (TcR or TCR). The assembly of alpha-beta TR heterodimers with CD3 occurs in the endoplasmic reticulum where a single alpha-beta TR heterodimer associates with one CD3D-CD3E heterodimer, one CD3G-CD3E heterodimer and one CD247 homodimer forming a stable octameric structure. CD3D-CD3E and CD3G-CD3E heterodimers preferentially associate with TR alpha and TR beta chains, respectively. The association of the CD247 homodimer is the last step of TcR assembly in the endoplasmic reticulum and is required for transport to the cell surface.

It localises to the cell membrane. Functionally, v region of the variable domain of T cell receptor (TR) alpha chain that participates in the antigen recognition. Alpha-beta T cell receptors are antigen specific receptors which are essential to the immune response and are present on the cell surface of T lymphocytes. Recognize peptide-major histocompatibility (MH) (pMH) complexes that are displayed by antigen presenting cells (APC), a prerequisite for efficient T cell adaptive immunity against pathogens. Binding of alpha-beta TR to pMH complex initiates TR-CD3 clustering on the cell surface and intracellular activation of LCK that phosphorylates the ITAM motifs of CD3G, CD3D, CD3E and CD247 enabling the recruitment of ZAP70. In turn ZAP70 phosphorylates LAT, which recruits numerous signaling molecules to form the LAT signalosome. The LAT signalosome propagates signal branching to three major signaling pathways, the calcium, the mitogen-activated protein kinase (MAPK) kinase and the nuclear factor NF-kappa-B (NF-kB) pathways, leading to the mobilization of transcription factors that are critical for gene expression and essential for T cell growth and differentiation. The T cell repertoire is generated in the thymus, by V-(D)-J rearrangement. This repertoire is then shaped by intrathymic selection events to generate a peripheral T cell pool of self-MH restricted, non-autoaggressive T cells. Post-thymic interaction of alpha-beta TR with the pMH complexes shapes TR structural and functional avidity. This Homo sapiens (Human) protein is T cell receptor alpha variable 10.